Here is a 178-residue protein sequence, read N- to C-terminus: Alkyl hydroperoxide reductase AhpD (178 aa).

Cysteine 131 (proton donor) is an active-site residue. Cysteine 131 and cysteine 134 are joined by a disulfide. Cysteine 134 serves as the catalytic Cysteine sulfenic acid (-SOH) intermediate.

It belongs to the AhpD family.

The enzyme catalyses N(6)-[(R)-dihydrolipoyl]-L-lysyl-[lipoyl-carrier protein] + a hydroperoxide = N(6)-[(R)-lipoyl]-L-lysyl-[lipoyl-carrier protein] + an alcohol + H2O. Functionally, antioxidant protein with alkyl hydroperoxidase activity. Required for the reduction of the AhpC active site cysteine residues and for the regeneration of the AhpC enzyme activity. In Methylocella silvestris (strain DSM 15510 / CIP 108128 / LMG 27833 / NCIMB 13906 / BL2), this protein is Alkyl hydroperoxide reductase AhpD.